The sequence spans 792 residues: Host cell factor 2 (792 aa).

4 Kelch repeats span residues 34-79 (LMII…GFVC), 83-130 (RILV…RLGH), 207-255 (KMYV…VIGN), and 257-303 (MYIF…VSDS). The Fibronectin type-III 1 domain occupies 359–449 (APSQVQLIKA…QPATKETSMK (91 aa)). Residues 399 to 447 (ASSDSSAAPNMQGVRMDPHRQGSNNIVPNSINDTINSTKTEQPATKETS) are disordered. The segment covering 419–445 (QGSNNIVPNSINDTINSTKTEQPATKE) has biased composition (polar residues). Lysine 553 participates in a covalent cross-link: Glycyl lysine isopeptide (Lys-Gly) (interchain with G-Cter in SUMO2). 2 consecutive Fibronectin type-III domains span residues 583–675 (TPSN…TCIP) and 677–787 (FPGA…GNNK).

Binds KMT2A/MLL1. Component of the MLL1/MLL complex, at least composed of KMT2A/MLL1, ASH2L, RBBP5, DPY30, WDR5, MEN1, HCFC1 and HCFC2. Interacts with TASOR. Highly expressed in testis. Detected at lower levels in spleen, thymus, prostate, ovary, small intestine and colon.

The protein localises to the cytoplasm. It is found in the nucleus. The sequence is that of Host cell factor 2 (HCFC2) from Homo sapiens (Human).